The following is a 32-amino-acid chain: Dermatoxin-J2 (32 aa).

Glutamine amide is present on Q32.

Expressed by the skin glands.

Its subcellular location is the secreted. In terms of biological role, antimicrobial peptide. The chain is Dermatoxin-J2 from Phasmahyla jandaia (Jandaia leaf frog).